Consider the following 964-residue polypeptide: Syndetin (964 aa).

At methionine 1 the chain carries N-acetylmethionine. The tract at residues 1–25 is disordered; sequence MQKIKSLMTRQGLKSPPESLNDLGA. Serine 15 carries the phosphoserine modification. Coiled-coil stretches lie at residues 81-107 and 216-244; these read LNLQELEEYRDKLKQQQAAVSKKVADL and YSCISELNSKLQDTLEQIEEQLDVALSKI. Phosphoserine is present on residues serine 494, serine 498, serine 559, and serine 561. A disordered region spans residues 532 to 563; that stretch reads DEETEDVLASNGYESDEQEKSAYQDYDSDSDV. Lysine 963 participates in a covalent cross-link: Glycyl lysine isopeptide (Lys-Gly) (interchain with G-Cter in SUMO1); alternate. Residue lysine 963 forms a Glycyl lysine isopeptide (Lys-Gly) (interchain with G-Cter in SUMO2); alternate linkage.

Belongs to the syndetin family. In terms of assembly, component of the endosome-associated retrograde protein (EARP) complex, composed of VPS51, VPS52, VPS53 and VPS50/Syndetin. The EARP complex interacts with EIPR1. Interacts with VPS51 and VPS53 in an EIPR1-independent manner. In terms of tissue distribution, expressed in the brain (at protein level).

The protein resides in the recycling endosome. Its subcellular location is the membrane. Acts as a component of the EARP complex that is involved in endocytic recycling. The EARP complex associates with Rab4-positive endosomes and promotes recycling of internalized transferrin receptor (TFRC) to the plasma membrane. Within the EARP complex, required to tether the complex to recycling endosomes. Not involved in retrograde transport from early and late endosomes to the trans-Golgi network (TGN). The protein is Syndetin of Rattus norvegicus (Rat).